The chain runs to 352 residues: Deoxyhypusine synthase-like protein (352 aa).

The protein belongs to the deoxyhypusine synthase family.

The polypeptide is Deoxyhypusine synthase-like protein (Coxiella burnetii (strain Dugway 5J108-111)).